Reading from the N-terminus, the 352-residue chain is Isoflavone-7-O-methyltransferase 9 (352 aa).

Residue 118–127 participates in substrate binding; it reads VLDPTLSGSY. S-adenosyl-L-methionine contacts are provided by G196, D219, D239, M240, and K253. H257 (proton acceptor) is an active-site residue.

The protein belongs to the class I-like SAM-binding methyltransferase superfamily. Cation-independent O-methyltransferase family. COMT subfamily. In terms of assembly, homodimer.

It carries out the reaction a 7-hydroxyisoflavone + S-adenosyl-L-methionine = a 7-methoxyisoflavone + S-adenosyl-L-homocysteine + H(+). It functions in the pathway phytoalexin biosynthesis; medicarpin biosynthesis. Its function is as follows. Transfers a methyl group to 7-hydroxyls of the isoflavones daidzein, genistein and 6,7,4'-trihydroxyisoflavone. Can also methylate (+)6a-hydroxymaackiain with lower efficiency. This Medicago sativa (Alfalfa) protein is Isoflavone-7-O-methyltransferase 9.